The sequence spans 483 residues: tRNA sulfurtransferase (483 aa).

Residues 62–166 form the THUMP domain; that stretch reads PEICDALTRI…QDKLILVKAR (105 aa). ATP contacts are provided by residues 184-185, K266, G288, and Q297; that span reads LI. Residues C345 and C457 are joined by a disulfide bond. Positions 405–483 constitute a Rhodanese domain; sequence LADTDVLLDI…GYTNVKVYRP (79 aa). Residue C457 is the Cysteine persulfide intermediate of the active site.

The protein belongs to the ThiI family.

The protein resides in the cytoplasm. The catalysed reaction is [ThiI sulfur-carrier protein]-S-sulfanyl-L-cysteine + a uridine in tRNA + 2 reduced [2Fe-2S]-[ferredoxin] + ATP + H(+) = [ThiI sulfur-carrier protein]-L-cysteine + a 4-thiouridine in tRNA + 2 oxidized [2Fe-2S]-[ferredoxin] + AMP + diphosphate. It carries out the reaction [ThiS sulfur-carrier protein]-C-terminal Gly-Gly-AMP + S-sulfanyl-L-cysteinyl-[cysteine desulfurase] + AH2 = [ThiS sulfur-carrier protein]-C-terminal-Gly-aminoethanethioate + L-cysteinyl-[cysteine desulfurase] + A + AMP + 2 H(+). Its pathway is cofactor biosynthesis; thiamine diphosphate biosynthesis. Catalyzes the ATP-dependent transfer of a sulfur to tRNA to produce 4-thiouridine in position 8 of tRNAs, which functions as a near-UV photosensor. Also catalyzes the transfer of sulfur to the sulfur carrier protein ThiS, forming ThiS-thiocarboxylate. This is a step in the synthesis of thiazole, in the thiamine biosynthesis pathway. The sulfur is donated as persulfide by IscS. The sequence is that of tRNA sulfurtransferase from Yersinia pseudotuberculosis serotype IB (strain PB1/+).